A 120-amino-acid chain; its full sequence is Peptidyl-tRNA hydrolase (120 aa).

This sequence belongs to the PTH2 family. Homodimer.

Its subcellular location is the cytoplasm. It carries out the reaction an N-acyl-L-alpha-aminoacyl-tRNA + H2O = an N-acyl-L-amino acid + a tRNA + H(+). Functionally, the natural substrate for this enzyme may be peptidyl-tRNAs which drop off the ribosome during protein synthesis. The polypeptide is Peptidyl-tRNA hydrolase (Saccharolobus solfataricus (strain ATCC 35092 / DSM 1617 / JCM 11322 / P2) (Sulfolobus solfataricus)).